The chain runs to 804 residues: MTSSPFLDPWPSKAVFVRERLGLGERPNDSYCYNSAKNSTVLQGVTFGGIPTVLLLDVSCFLFLILVFSIIRRRFWDYGRIALVSEAGSEARFQRLSSSSSGQQDFENELGCCPWLTAIFRLHDDQILEWCGEDAIHYLSFQRHIIFLLVVISFLSLCVILPVNLSGDLLGKDPYSFGRTTIANLQTDNDLLWLHTVFSVIYLFLTVGFMWHHTRSIRYKEESLVRQTLFITGLPREARKETVESHFRDAYPTCEVVDVQLCYSVAKLIYLCKERKKTEKSLTYYTNLQAKTGRRTLINPKPCGQFCCCEVQGCEREDAISYYTRMNDSLLERITAEESRVQDQPLGMAFVTFREKSMATYILKDFNACKCQGLRCKGEPQPSSYSRELCVSKWTVTFASYPEDICWKNLSIQGVRWWLQWLGINFSLFVVLFFLTTPSIIMSTMDKFNVTKPIHALNNPVISQFFPTLLLWSFSALLPSIVYYSTLLESHWTRSGENRIMVSKVYIFLIFMVLILPSLGLTSLDFFFRWLFDKTSSETSIRLECVFLPDQGAFFVNYVIASAFIGSGMELLRLPGLILYTFRMIMAKTAADRRNVKQNQAFEYEFGAMYAWMLCVFTVIMAYSITCPIIVPFGLIYILLKHMVDRHNLYFAYLPAKLEKRIHFAAVNQALAAPILCLFWLFFFSFLRLGLTAPATLFTFLVVLLTILACLLYTCFGCFKHLSPWNYKTEESASDKGSEAEAHVPPPFTPYVPRILNGLASERTALSPQQQQTYGAIRNISGTLPGQPVAQDPSGTAAYAYQES.

At methionine 1–proline 51 the chain is on the extracellular side. Asparagine 38 is a glycosylation site (N-linked (GlcNAc...) asparagine). A helical transmembrane segment spans residues threonine 52 to arginine 74. Topologically, residues phenylalanine 75–glutamate 133 are cytoplasmic. The helical transmembrane segment at aspartate 134 to serine 166 threads the bilayer. At glycine 167–aspartate 190 the chain is on the extracellular side. The chain crosses the membrane as a helical span at residues leucine 191 to serine 216. The Cytoplasmic segment spans residues isoleucine 217–valine 415. The interval arginine 218–glutamine 413 is intracellular linker IL2; confers mechanosensitivity. A helical transmembrane segment spans residues arginine 416–serine 443. At threonine 444–valine 461 the chain is on the extracellular side. Asparagine 449 carries N-linked (GlcNAc...) asparagine glycosylation. A helical membrane pass occupies residues isoleucine 462 to glutamate 489. The Cytoplasmic segment spans residues serine 490–arginine 494. A helical transmembrane segment spans residues serine 495 to leucine 531. The Extracellular portion of the chain corresponds to phenylalanine 532–alanine 553. Residues phenylalanine 554–isoleucine 585 form a helical membrane-spanning segment. A gating helix region spans residues phenylalanine 554–isoleucine 585. Topologically, residues methionine 586–glutamate 605 are cytoplasmic. A helical transmembrane segment spans residues phenylalanine 606 to tyrosine 623. The Extracellular segment spans residues serine 624–cysteine 627. A helical membrane pass occupies residues proline 628–tyrosine 650. Topologically, residues phenylalanine 651–lysine 660 are cytoplasmic. The chain crosses the membrane as a helical span at residues arginine 661–arginine 688. Topologically, residues leucine 689–alanine 693 are extracellular. The chain crosses the membrane as a helical span at residues proline 694–leucine 708. Over alanine 709–serine 804 the chain is Cytoplasmic. Serine 738 carries the phosphoserine modification.

It belongs to the CSC1 (TC 1.A.17) family. In terms of assembly, monomer. N-Glycosylated.

Its subcellular location is the lysosome membrane. The protein localises to the early endosome membrane. The protein resides in the cell membrane. It carries out the reaction Ca(2+)(in) = Ca(2+)(out). Its function is as follows. Mechanosensitive cation channel with low conductance and high activation threshold. In contrast to TMEM63B, does not show phospholipid scramblase activity. Acts as a regulator of lysosomal morphology by mediating lysosomal mechanosensitivity. Important for the baby's first breath and respiration throughout life. Upon lung inflation conducts cation currents in alveolar type 1 and 2 cells triggering lamellar body exocytosis and surfactant secretion into airspace. Also acts as an osmosensitive cation channel preferentially activated by hypotonic stress. The protein is Mechanosensitive cation channel TMEM63A of Mus musculus (Mouse).